The primary structure comprises 465 residues: Ribulose bisphosphate carboxylase large chain (465 aa).

Lys4 carries the N6,N6,N6-trimethyllysine modification. Residues Asn113 and Thr163 each coordinate substrate. Lys165 acts as the Proton acceptor in catalysis. Lys167 contributes to the substrate binding site. The Mg(2+) site is built by Lys191, Asp193, and Glu194. Position 191 is an N6-carboxylysine (Lys191). His284 functions as the Proton acceptor in the catalytic mechanism. Substrate is bound by residues Arg285, His317, and Ser369.

It belongs to the RuBisCO large chain family. Type I subfamily. In terms of assembly, heterohexadecamer of 8 large chains and 8 small chains; disulfide-linked. The disulfide link is formed within the large subunit homodimers. Mg(2+) serves as cofactor. The disulfide bond which can form in the large chain dimeric partners within the hexadecamer appears to be associated with oxidative stress and protein turnover.

The protein resides in the plastid. It is found in the chloroplast. It catalyses the reaction 2 (2R)-3-phosphoglycerate + 2 H(+) = D-ribulose 1,5-bisphosphate + CO2 + H2O. The catalysed reaction is D-ribulose 1,5-bisphosphate + O2 = 2-phosphoglycolate + (2R)-3-phosphoglycerate + 2 H(+). Functionally, ruBisCO catalyzes two reactions: the carboxylation of D-ribulose 1,5-bisphosphate, the primary event in carbon dioxide fixation, as well as the oxidative fragmentation of the pentose substrate in the photorespiration process. Both reactions occur simultaneously and in competition at the same active site. This is Ribulose bisphosphate carboxylase large chain from Cornus florida (Flowering dogwood).